The following is an 862-amino-acid chain: Aldehyde-alcohol dehydrogenase (862 aa).

Cys244 is a catalytic residue. 420–425 is an NAD(+) binding site; that stretch reads GFWGGN.

This sequence in the N-terminal section; belongs to the aldehyde dehydrogenase family. In the C-terminal section; belongs to the iron-containing alcohol dehydrogenase family.

The enzyme catalyses a primary alcohol + NAD(+) = an aldehyde + NADH + H(+). It carries out the reaction a secondary alcohol + NAD(+) = a ketone + NADH + H(+). The catalysed reaction is an aldehyde + NAD(+) + H2O = a carboxylate + NADH + 2 H(+). Has both aldehyde and alcohol dehydrogenase activities. Can use acetaldehyde, butyraldehyde, butanol and ethanol. This Clostridium acetobutylicum (strain ATCC 824 / DSM 792 / JCM 1419 / IAM 19013 / LMG 5710 / NBRC 13948 / NRRL B-527 / VKM B-1787 / 2291 / W) protein is Aldehyde-alcohol dehydrogenase.